Here is a 125-residue protein sequence, read N- to C-terminus: UPF0593 mitochondrial protein C806.05 (125 aa).

This sequence belongs to the UPF0593 family.

The protein resides in the mitochondrion. In Schizosaccharomyces pombe (strain 972 / ATCC 24843) (Fission yeast), this protein is UPF0593 mitochondrial protein C806.05.